A 754-amino-acid polypeptide reads, in one-letter code: 5-methyltetrahydropteroyltriglutamate--homocysteine methyltransferase (754 aa).

5-methyltetrahydropteroyltri-L-glutamate-binding positions include 17–20 and lysine 117; that span reads RELK. L-homocysteine contacts are provided by residues 431-433 and glutamate 484; that span reads IGS. Residues 431-433 and glutamate 484 contribute to the L-methionine site; that span reads IGS. 5-methyltetrahydropteroyltri-L-glutamate contacts are provided by residues 515 to 516 and tryptophan 561; that span reads RC. Aspartate 599 is a binding site for L-homocysteine. Aspartate 599 provides a ligand contact to L-methionine. Glutamate 605 contributes to the 5-methyltetrahydropteroyltri-L-glutamate binding site. Residues histidine 641, cysteine 643, and glutamate 665 each coordinate Zn(2+). Residue histidine 694 is the Proton donor of the active site. Position 726 (cysteine 726) interacts with Zn(2+).

It belongs to the vitamin-B12 independent methionine synthase family. It depends on Zn(2+) as a cofactor.

The catalysed reaction is 5-methyltetrahydropteroyltri-L-glutamate + L-homocysteine = tetrahydropteroyltri-L-glutamate + L-methionine. Its pathway is amino-acid biosynthesis; L-methionine biosynthesis via de novo pathway; L-methionine from L-homocysteine (MetE route): step 1/1. Catalyzes the transfer of a methyl group from 5-methyltetrahydrofolate to homocysteine resulting in methionine formation. The sequence is that of 5-methyltetrahydropteroyltriglutamate--homocysteine methyltransferase from Salmonella typhi.